The following is a 440-amino-acid chain: MTFLPQEFIRKVRDRAPLDTADVARFVQGVTAGDVTEGQIAAFAMAVYFNELPLSARIALTLAQRDSGDVLDWRGARLNGPVVDKHSTGGVGDLTSLVIGPMVAACGGYVPMISGRGLGHTGGTLDKLEAIPGYDVAPSVDMLRRVVRDAGLAIVGQTAQLAPADKRIYAVRDVTATVESISLITASILSKKLAAGVSALAMDVKVGSGAFMPSAEQSAELARSIVDVGNGAGMRTAATLTDMNQALAPCAGNAIEVRCAIDFLTGAARPARLEAVSFALAAQMLTMGGLAADAHDARRRLRAVLESGAAAERFARMVAALGGPADLVERPERHLPRAAAAAPVAAARAGWIERIDARALGLAVVGLGGGRAKIGDTLDYSVGLSALAELGERVEAGQPLATVHARDADSAAQATDAVRRAYRIGAEPPAQTRVVHAVIE.

It belongs to the thymidine/pyrimidine-nucleoside phosphorylase family. In terms of assembly, homodimer.

The catalysed reaction is thymidine + phosphate = 2-deoxy-alpha-D-ribose 1-phosphate + thymine. It participates in pyrimidine metabolism; dTMP biosynthesis via salvage pathway; dTMP from thymine: step 1/2. Functionally, the enzymes which catalyze the reversible phosphorolysis of pyrimidine nucleosides are involved in the degradation of these compounds and in their utilization as carbon and energy sources, or in the rescue of pyrimidine bases for nucleotide synthesis. The sequence is that of Thymidine phosphorylase from Burkholderia pseudomallei (strain 1106a).